Here is a 140-residue protein sequence, read N- to C-terminus: Nucleoside triphosphatase NudI (140 aa).

Positions 1-140 (MRHRTIVCPL…RVTLSLKGLL (140 aa)) constitute a Nudix hydrolase domain. Positions 38–58 (GVEPGERIEEALRREIREELG) match the Nudix box motif.

The protein belongs to the Nudix hydrolase family. NudI subfamily. In terms of assembly, monomer. Requires Mg(2+) as cofactor.

It catalyses the reaction a ribonucleoside 5'-triphosphate + H2O = a ribonucleoside 5'-phosphate + diphosphate + H(+). It carries out the reaction a 2'-deoxyribonucleoside 5'-triphosphate + H2O = a 2'-deoxyribonucleoside 5'-phosphate + diphosphate + H(+). The catalysed reaction is dUTP + H2O = dUMP + diphosphate + H(+). The enzyme catalyses dTTP + H2O = dTMP + diphosphate + H(+). It catalyses the reaction dCTP + H2O = dCMP + diphosphate + H(+). Its function is as follows. Catalyzes the hydrolysis of nucleoside triphosphates, with a preference for pyrimidine deoxynucleoside triphosphates (dUTP, dTTP and dCTP). The protein is Nucleoside triphosphatase NudI of Klebsiella pneumoniae subsp. pneumoniae (strain ATCC 700721 / MGH 78578).